A 121-amino-acid polypeptide reads, in one-letter code: Protein SNORC (121 aa).

The N-terminal stretch at 1–24 (MASCLALRMALLLVSGVLAPAVLT) is a signal peptide. Residues 25–92 (DDVPQEPVPT…QGGGSLGPGA (68 aa)) are Extracellular-facing. The segment at 28–84 (PQEPVPTLWNEPAELPSGEGPVESTSPGREPVDTGPPAPTVAPGPEDSTAQERLDQG) is disordered. A helical transmembrane segment spans residues 93 to 113 (IAAIVIAALLATCVVLALVVV). The Cytoplasmic portion of the chain corresponds to 114–121 (ALRKFSAS).

In terms of assembly, interacts (via the extracellular domain) with FGF2. As to expression, expressed in cartilage.

It localises to the membrane. It is found in the cytoplasm. The protein resides in the secreted. The protein localises to the extracellular space. Its subcellular location is the extracellular matrix. Functionally, plays a role in the regulation of chondrocyte maturation and postnatal endochondral ossification. May inhibit cell growth stimulation induced by FGF2. This Homo sapiens (Human) protein is Protein SNORC.